Here is a 423-residue protein sequence, read N- to C-terminus: Histidine--tRNA ligase (423 aa).

Belongs to the class-II aminoacyl-tRNA synthetase family. In terms of assembly, homodimer.

It is found in the cytoplasm. It catalyses the reaction tRNA(His) + L-histidine + ATP = L-histidyl-tRNA(His) + AMP + diphosphate + H(+). This chain is Histidine--tRNA ligase, found in Actinobacillus succinogenes (strain ATCC 55618 / DSM 22257 / CCUG 43843 / 130Z).